We begin with the raw amino-acid sequence, 717 residues long: Ubiquitin carboxyl-terminal hydrolase 11 (717 aa).

Residues 231–268 (ATAPPVHSLEVSSQIRDSSQDSSSSLSKVEKPKEEEGK) are disordered. A compositionally biased stretch (low complexity) spans 242 to 257 (SSQIRDSSQDSSSSLS). Residues 258–268 (KVEKPKEEEGK) are compositionally biased toward basic and acidic residues. Residues 298–707 (TGLQNPCNTC…EVYVLFYERM (410 aa)) enclose the USP domain. The Nucleophile role is filled by cysteine 307. A disordered region spans residues 531-577 (KKEEITSQKKKSTIFGFHSRSRSKSPHHHHHHHHSSDDSTKNAKKRN). Over residues 549–564 (SRSRSKSPHHHHHHHH) the composition is skewed to basic residues. The active-site Proton acceptor is the histidine 649.

Belongs to the peptidase C19 family.

It carries out the reaction Thiol-dependent hydrolysis of ester, thioester, amide, peptide and isopeptide bonds formed by the C-terminal Gly of ubiquitin (a 76-residue protein attached to proteins as an intracellular targeting signal).. This is Ubiquitin carboxyl-terminal hydrolase 11 (UBP11) from Saccharomyces cerevisiae (strain ATCC 204508 / S288c) (Baker's yeast).